The sequence spans 436 residues: Mannan endo-1,4-beta-mannosidase F (436 aa).

The N-terminal stretch at 1–18 (MRSLSSVALLSAIGAASA) is a signal peptide. One can recognise a CBM1 domain in the interval 19 to 54 (QAGPWGQCAGISHTGPTTCESGWSCVYLNDWYSQCQ). The tract at residues 60–88 (SSSTTVSSTKQPSSTVAAPSSTTSAHTLP) is disordered. The segment at 79 to 113 (SSTTSAHTLPTGSGSFAKTDGLKFNIDGKTKYFAG) is ser-rich linker. Residues 114–436 (TNAYWLPFLT…CAVIDHISQI (323 aa)) form a catalytic region. Residues Trp146 and Asn260 each coordinate substrate. Glu261 serves as the catalytic Proton donor. Tyr336 contacts substrate. The Nucleophile role is filled by Glu370. Residue Trp400 coordinates substrate.

It belongs to the glycosyl hydrolase 5 (cellulase A) family.

It is found in the secreted. The enzyme catalyses Random hydrolysis of (1-&gt;4)-beta-D-mannosidic linkages in mannans, galactomannans and glucomannans.. Endo-1,4-mannanase, a crucial enzyme for depolymerization of seed galactomannans and wood galactoglucomannans. The polypeptide is Mannan endo-1,4-beta-mannosidase F (manF) (Aspergillus clavatus (strain ATCC 1007 / CBS 513.65 / DSM 816 / NCTC 3887 / NRRL 1 / QM 1276 / 107)).